The sequence spans 325 residues: Protease HtpX homolog (325 aa).

A helical transmembrane segment spans residues 20–40 (IGYLLGGGGGMMIALVIAVAM). H130 is a binding site for Zn(2+). E131 is a catalytic residue. H134 provides a ligand contact to Zn(2+). The next 2 membrane-spanning stretches (helical) occupy residues 145 to 165 (IVAT…FLGG) and 173 to 193 (VMGV…AMIV). Residue E202 coordinates Zn(2+). Residues 288 to 325 (AMTARAAAPSQNSGPWGQRSDNAGGNSNGGSRYRGPWS) are disordered. Residues 306–325 (RSDNAGGNSNGGSRYRGPWS) show a composition bias toward low complexity.

The protein belongs to the peptidase M48B family. The cofactor is Zn(2+).

The protein localises to the cell inner membrane. The sequence is that of Protease HtpX homolog from Brucella abortus (strain S19).